The primary structure comprises 188 residues: Elongation factor P (188 aa).

Belongs to the elongation factor P family.

The protein localises to the cytoplasm. Its pathway is protein biosynthesis; polypeptide chain elongation. In terms of biological role, involved in peptide bond synthesis. Stimulates efficient translation and peptide-bond synthesis on native or reconstituted 70S ribosomes in vitro. Probably functions indirectly by altering the affinity of the ribosome for aminoacyl-tRNA, thus increasing their reactivity as acceptors for peptidyl transferase. This is Elongation factor P from Malacoplasma penetrans (strain HF-2) (Mycoplasma penetrans).